A 102-amino-acid polypeptide reads, in one-letter code: Large ribosomal subunit protein bL21 (102 aa).

The protein belongs to the bacterial ribosomal protein bL21 family. As to quaternary structure, part of the 50S ribosomal subunit. Contacts protein L20.

This protein binds to 23S rRNA in the presence of protein L20. This chain is Large ribosomal subunit protein bL21, found in Macrococcus caseolyticus (strain JCSC5402) (Macrococcoides caseolyticum).